Here is a 279-residue protein sequence, read N- to C-terminus: Small ribosomal subunit protein uS2 (279 aa).

Residues arginine 232–glutamate 279 are disordered. Basic and acidic residues predominate over residues glutamate 252–glutamate 271.

The protein belongs to the universal ribosomal protein uS2 family.

This Salinispora arenicola (strain CNS-205) protein is Small ribosomal subunit protein uS2.